The chain runs to 340 residues: GTP 3',8-cyclase (340 aa).

A Radical SAM core domain is found at 8–227 (KLGRPIRDLR…SMIQEEFDIE (220 aa)). Arg-17 contacts GTP. [4Fe-4S] cluster contacts are provided by Cys-24 and Cys-28. Tyr-30 lines the S-adenosyl-L-methionine pocket. Cys-31 contacts [4Fe-4S] cluster. Residue Arg-71 coordinates GTP. Residue Gly-75 coordinates S-adenosyl-L-methionine. Position 102 (Thr-102) interacts with GTP. Position 126 (Ser-126) interacts with S-adenosyl-L-methionine. Lys-163 contacts GTP. Met-197 serves as a coordination point for S-adenosyl-L-methionine. Positions 261 and 264 each coordinate [4Fe-4S] cluster. 266 to 268 (RAR) is a binding site for GTP. Cys-278 contributes to the [4Fe-4S] cluster binding site.

It belongs to the radical SAM superfamily. MoaA family. Monomer and homodimer. [4Fe-4S] cluster is required as a cofactor.

It carries out the reaction GTP + AH2 + S-adenosyl-L-methionine = (8S)-3',8-cyclo-7,8-dihydroguanosine 5'-triphosphate + 5'-deoxyadenosine + L-methionine + A + H(+). It functions in the pathway cofactor biosynthesis; molybdopterin biosynthesis. Catalyzes the cyclization of GTP to (8S)-3',8-cyclo-7,8-dihydroguanosine 5'-triphosphate. This chain is GTP 3',8-cyclase, found in Staphylococcus carnosus (strain TM300).